Here is a 240-residue protein sequence, read N- to C-terminus: Probable transcriptional regulatory protein SO_3401 (240 aa).

The protein belongs to the TACO1 family.

The protein resides in the cytoplasm. The sequence is that of Probable transcriptional regulatory protein SO_3401 from Shewanella oneidensis (strain ATCC 700550 / JCM 31522 / CIP 106686 / LMG 19005 / NCIMB 14063 / MR-1).